A 132-amino-acid polypeptide reads, in one-letter code: Small ribosomal subunit protein uS8 (132 aa).

The protein belongs to the universal ribosomal protein uS8 family. In terms of assembly, part of the 30S ribosomal subunit. Contacts proteins S5 and S12.

One of the primary rRNA binding proteins, it binds directly to 16S rRNA central domain where it helps coordinate assembly of the platform of the 30S subunit. The protein is Small ribosomal subunit protein uS8 of Leuconostoc citreum (strain KM20).